A 750-amino-acid chain; its full sequence is Photosystem I P700 chlorophyll a apoprotein A1 (750 aa).

A run of 8 helical transmembrane segments spans residues 70-93 (VFSA…FHGA), 156-179 (LYCT…FHYH), 195-219 (LNHH…HVSL), 291-309 (IAHH…GHMY), 346-369 (WHAQ…HHMY), 385-411 (LSLF…IFMV), 433-455 (AIIS…LYIH), and 531-549 (FLVH…LILL). Residues cysteine 573 and cysteine 582 each coordinate [4Fe-4S] cluster. 2 consecutive transmembrane segments (helical) span residues 589–610 (HVFL…HFSW) and 664–686 (LSAY…MFLF). Histidine 675 contacts chlorophyll a'. Residues methionine 683 and tyrosine 691 each contribute to the chlorophyll a site. Tryptophan 692 is a phylloquinone binding site. A helical membrane pass occupies residues 724-744 (AVGVTHYLLGGIATTWAFFLA).

Belongs to the PsaA/PsaB family. As to quaternary structure, the PsaA/B heterodimer binds the P700 chlorophyll special pair and subsequent electron acceptors. PSI consists of a core antenna complex that captures photons, and an electron transfer chain that converts photonic excitation into a charge separation. The eukaryotic PSI reaction center is composed of at least 11 subunits. P700 is a chlorophyll a/chlorophyll a' dimer, A0 is one or more chlorophyll a, A1 is one or both phylloquinones and FX is a shared 4Fe-4S iron-sulfur center. serves as cofactor.

Its subcellular location is the plastid. It localises to the chloroplast thylakoid membrane. The catalysed reaction is reduced [plastocyanin] + hnu + oxidized [2Fe-2S]-[ferredoxin] = oxidized [plastocyanin] + reduced [2Fe-2S]-[ferredoxin]. PsaA and PsaB bind P700, the primary electron donor of photosystem I (PSI), as well as the electron acceptors A0, A1 and FX. PSI is a plastocyanin-ferredoxin oxidoreductase, converting photonic excitation into a charge separation, which transfers an electron from the donor P700 chlorophyll pair to the spectroscopically characterized acceptors A0, A1, FX, FA and FB in turn. Oxidized P700 is reduced on the lumenal side of the thylakoid membrane by plastocyanin. The chain is Photosystem I P700 chlorophyll a apoprotein A1 from Daucus carota (Wild carrot).